The sequence spans 348 residues: Ketol-acid reductoisomerase (NADP(+)) (348 aa).

Residues 2–182 (AKTYYDHDAD…GCTRAGVLET (181 aa)) enclose the KARI N-terminal Rossmann domain. NADP(+) contacts are provided by residues 25–28 (YGSQ), S51, S53, and 83–86 (DTAQ). H108 is an active-site residue. G134 contributes to the NADP(+) binding site. Residues 183-328 (TFKEETETDL…EKLRAAMPFL (146 aa)) form the KARI C-terminal knotted domain. Residues D191, E195, E227, and E231 each coordinate Mg(2+). S252 is a substrate binding site.

The protein belongs to the ketol-acid reductoisomerase family. It depends on Mg(2+) as a cofactor.

It catalyses the reaction (2R)-2,3-dihydroxy-3-methylbutanoate + NADP(+) = (2S)-2-acetolactate + NADPH + H(+). The catalysed reaction is (2R,3R)-2,3-dihydroxy-3-methylpentanoate + NADP(+) = (S)-2-ethyl-2-hydroxy-3-oxobutanoate + NADPH + H(+). It functions in the pathway amino-acid biosynthesis; L-isoleucine biosynthesis; L-isoleucine from 2-oxobutanoate: step 2/4. The protein operates within amino-acid biosynthesis; L-valine biosynthesis; L-valine from pyruvate: step 2/4. Functionally, involved in the biosynthesis of branched-chain amino acids (BCAA). Catalyzes an alkyl-migration followed by a ketol-acid reduction of (S)-2-acetolactate (S2AL) to yield (R)-2,3-dihydroxy-isovalerate. In the isomerase reaction, S2AL is rearranged via a Mg-dependent methyl migration to produce 3-hydroxy-3-methyl-2-ketobutyrate (HMKB). In the reductase reaction, this 2-ketoacid undergoes a metal-dependent reduction by NADPH to yield (R)-2,3-dihydroxy-isovalerate. The polypeptide is Ketol-acid reductoisomerase (NADP(+)) (Acidobacterium capsulatum (strain ATCC 51196 / DSM 11244 / BCRC 80197 / JCM 7670 / NBRC 15755 / NCIMB 13165 / 161)).